A 232-amino-acid chain; its full sequence is Ribonuclease 3 (232 aa).

The RNase III domain maps to K5 to G134. E47 contributes to the Mg(2+) binding site. The active site involves D51. The Mg(2+) site is built by D120 and E123. E123 is a catalytic residue. Residues D160–S229 enclose the DRBM domain. The interval K203–F232 is disordered. The segment covering K213 to F232 has biased composition (basic and acidic residues).

It belongs to the ribonuclease III family. In terms of assembly, homodimer. Mg(2+) serves as cofactor.

It localises to the cytoplasm. The catalysed reaction is Endonucleolytic cleavage to 5'-phosphomonoester.. Functionally, digests double-stranded RNA. Involved in the processing of primary rRNA transcript to yield the immediate precursors to the large and small rRNAs (23S and 16S). Processes some mRNAs, and tRNAs when they are encoded in the rRNA operon. Processes pre-crRNA and tracrRNA of type II CRISPR loci if present in the organism. This chain is Ribonuclease 3, found in Streptococcus sanguinis (strain SK36).